The sequence spans 59 residues: Bacteriocin curvacin-A (59 aa).

Positions 1 to 18 (MNNVKELSMTELQTITGG) are excised as a propeptide. A disulfide bridge links Cys-28 with Cys-33.

Belongs to the bacteriocin class IIA/YGNGV family.

It localises to the secreted. In terms of biological role, bactericidal activity; inhibits closely related Lactobacilli, Listeria monocytogenes and ivanovvi, Enterococcus faecalis, Carnobacterium sp and Brocothrix thermosphacta. This is Bacteriocin curvacin-A (curA) from Latilactobacillus curvatus (Lactobacillus curvatus).